The following is a 207-amino-acid chain: Probable molybdenum cofactor guanylyltransferase (207 aa).

Residues 9–11 (LAG), Lys21, and Asp97 contribute to the GTP site. Residue Asp97 coordinates Mg(2+).

It belongs to the MobA family. Mg(2+) serves as cofactor.

It is found in the cytoplasm. It catalyses the reaction Mo-molybdopterin + GTP + H(+) = Mo-molybdopterin guanine dinucleotide + diphosphate. Transfers a GMP moiety from GTP to Mo-molybdopterin (Mo-MPT) cofactor (Moco or molybdenum cofactor) to form Mo-molybdopterin guanine dinucleotide (Mo-MGD) cofactor. This Nostoc sp. (strain PCC 7120 / SAG 25.82 / UTEX 2576) protein is Probable molybdenum cofactor guanylyltransferase.